The primary structure comprises 851 residues: Leucine--tRNA ligase (851 aa).

Residues 51–61 (PYPSGDLHMGH) carry the 'HIGH' region motif. The short motif at 615-619 (KMSKS) is the 'KMSKS' region element. Lysine 618 contributes to the ATP binding site.

It belongs to the class-I aminoacyl-tRNA synthetase family.

The protein localises to the cytoplasm. The catalysed reaction is tRNA(Leu) + L-leucine + ATP = L-leucyl-tRNA(Leu) + AMP + diphosphate. The protein is Leucine--tRNA ligase of Clavibacter michiganensis subsp. michiganensis (strain NCPPB 382).